The following is a 576-amino-acid chain: MSETTPVPVGEAGEKSATALKKEQKKLEKEKKIAEAKAKKAAEKSAASGNSGEQKNEKKQEQVEENNSNWGELPMNQSKEKITREWTDVSQLTESLVGKSVLIRARLSTSRLQGANLCFVQLRDGLYTVQAVVAKGGSNSKSMVQFVGQVPKESIVDVQATVVSTSVPIESCTQKSVELQVSSFFIVSKSTLLPLQIEDLSRAQPLLDKQEDDLKQLEQLLQNTNLNEQEKTDLEKKKSECIKFVNVSQEKRLDNRALDLRVPAHQSIFRLQSGVCTLFREQLLGEGFIEIHSPKIISAASESGASVFKLNYFNTHAYLAQSPQLYKQMAICADFNKVFEIGPVFRAENSNTHRHLTEFVGLDLEMTFKDHYHEALDTLDRLMTSIFRGLETRFAKEIESVNTQYPFEPFKFTYPSPRFTFDEAAAMLAELNDPDYIVKDNDFNTRQEKRLGKIIKEKFGVDFFIVDKFHVEVRPFYTMPDPNNPQWANAYDLFMRGEEICSGAQRIHDPELLEKSAKSHGVVIEDIQGYIDSFKYGCSQHAGGGVGLERVVMLYLGLGNIRKASFCPRDPTRLTP.

Positions 1–78 (MSETTPVPVG…NWGELPMNQS (78 aa)) are disordered. The segment covering 20–43 (LKKEQKKLEKEKKIAEAKAKKAAE) has biased composition (basic and acidic residues). Glu-302 is a binding site for L-aspartate. The tract at residues 324–327 (QLYK) is aspartate. Residue Arg-346 coordinates L-aspartate. ATP contacts are provided by residues 346 to 348 (RAE), 354 to 356 (RHL), and Glu-499. The L-aspartate site is built by Ser-502 and Arg-506. 547 to 550 (GLER) contacts ATP.

Belongs to the class-II aminoacyl-tRNA synthetase family. Type 2 subfamily.

It localises to the cytoplasm. The catalysed reaction is tRNA(Asp) + L-aspartate + ATP = L-aspartyl-tRNA(Asp) + AMP + diphosphate. This chain is Aspartate--tRNA ligase, cytoplasmic 1 (aspS1), found in Dictyostelium discoideum (Social amoeba).